A 397-amino-acid polypeptide reads, in one-letter code: E3 ubiquitin-protein ligase RNF149 (397 aa).

The first 20 residues, 1-20 (MLRWLCLYSALCALTHGSSA), serve as a signal peptide directing secretion. Residues 39–49 (TNSSVTGSTES) show a composition bias toward polar residues. The segment at 39–60 (TNSSVTGSTESGRYGDSSPKES) is disordered. N-linked (GlcNAc...) asparagine glycans are attached at residues asparagine 40 and asparagine 140. The 88-residue stretch at 83–170 (YIVPGTSAAA…PKGMEIMEPL (88 aa)) folds into the PA domain. Residues 196–216 (VVFVAIAFITMMIISLAWLIF) form a helical membrane-spanning segment. An N-linked (GlcNAc...) asparagine glycan is attached at asparagine 231. An RING-type; atypical zinc finger spans residues 264-305 (CAVCIENYKTKDLVRILPCKHIFHRLCIDPWLIEHRTCPMCK). The segment at 341 to 397 (SITQEESRSEGNNLPSSSTGSSLQQSNSVKDDAGETTALLDDPGNDNAAATHTQDSH) is disordered. Positions 351-368 (GNNLPSSSTGSSLQQSNS) are enriched in low complexity. The span at 388 to 397 (AAATHTQDSH) shows a compositional bias: polar residues.

The protein resides in the membrane. It catalyses the reaction S-ubiquitinyl-[E2 ubiquitin-conjugating enzyme]-L-cysteine + [acceptor protein]-L-lysine = [E2 ubiquitin-conjugating enzyme]-L-cysteine + N(6)-ubiquitinyl-[acceptor protein]-L-lysine.. Its pathway is protein modification; protein ubiquitination. E3 ubiquitin-protein ligase. Ubiquitinates BRAF, inducing its proteasomal degradation. This chain is E3 ubiquitin-protein ligase RNF149 (rnf149), found in Xenopus laevis (African clawed frog).